Here is a 453-residue protein sequence, read N- to C-terminus: tRNA modification GTPase MnmE (453 aa).

Positions 23, 80, and 120 each coordinate (6S)-5-formyl-5,6,7,8-tetrahydrofolate. Positions 216–375 (GSKIVIIGKP…LIKYLKDLNC (160 aa)) constitute a TrmE-type G domain. Position 226 (Asn-226) interacts with K(+). GTP-binding positions include 226–231 (NSGKSS), 245–251 (TSIEGTT), and 270–273 (DTAG). Position 230 (Ser-230) interacts with Mg(2+). Residues Thr-245, Ile-247, and Thr-250 each coordinate K(+). Residue Thr-251 participates in Mg(2+) binding. Lys-453 serves as a coordination point for (6S)-5-formyl-5,6,7,8-tetrahydrofolate.

Belongs to the TRAFAC class TrmE-Era-EngA-EngB-Septin-like GTPase superfamily. TrmE GTPase family. In terms of assembly, homodimer. Heterotetramer of two MnmE and two MnmG subunits. K(+) serves as cofactor.

The protein localises to the cytoplasm. Functionally, exhibits a very high intrinsic GTPase hydrolysis rate. Involved in the addition of a carboxymethylaminomethyl (cmnm) group at the wobble position (U34) of certain tRNAs, forming tRNA-cmnm(5)s(2)U34. This is tRNA modification GTPase MnmE from Wigglesworthia glossinidia brevipalpis.